A 576-amino-acid polypeptide reads, in one-letter code: Sulfite reductase [NADPH] hemoprotein beta-component (576 aa).

Residues cysteine 435, cysteine 441, cysteine 480, and cysteine 484 each coordinate [4Fe-4S] cluster. Cysteine 484 contacts siroheme.

The protein belongs to the nitrite and sulfite reductase 4Fe-4S domain family. Alpha(8)-beta(8). The alpha component is a flavoprotein, the beta component is a hemoprotein. It depends on siroheme as a cofactor. Requires [4Fe-4S] cluster as cofactor.

The enzyme catalyses hydrogen sulfide + 3 NADP(+) + 3 H2O = sulfite + 3 NADPH + 4 H(+). The protein operates within sulfur metabolism; hydrogen sulfide biosynthesis; hydrogen sulfide from sulfite (NADPH route): step 1/1. Functionally, component of the sulfite reductase complex that catalyzes the 6-electron reduction of sulfite to sulfide. This is one of several activities required for the biosynthesis of L-cysteine from sulfate. The protein is Sulfite reductase [NADPH] hemoprotein beta-component of Yersinia pestis bv. Antiqua (strain Antiqua).